Here is a 432-residue protein sequence, read N- to C-terminus: Adenylosuccinate synthetase (432 aa).

GTP-binding positions include 12-18 and 40-42; these read GDEGKGK and GHT. The Proton acceptor role is filled by Asp-13. Mg(2+) is bound by residues Asp-13 and Gly-40. Residues 13–16, 38–41, Thr-126, Arg-140, Gln-219, Thr-234, and Arg-300 contribute to the IMP site; these read DEGK and NAGH. Residue His-41 is the Proton donor of the active site. 296-302 lines the substrate pocket; sequence STTGRPR. Residues Arg-302, 328 to 330, and 410 to 412 each bind GTP; these read KLD and STG.

Belongs to the adenylosuccinate synthetase family. In terms of assembly, homodimer. Mg(2+) serves as cofactor.

The protein localises to the cytoplasm. The enzyme catalyses IMP + L-aspartate + GTP = N(6)-(1,2-dicarboxyethyl)-AMP + GDP + phosphate + 2 H(+). The protein operates within purine metabolism; AMP biosynthesis via de novo pathway; AMP from IMP: step 1/2. Plays an important role in the de novo pathway of purine nucleotide biosynthesis. Catalyzes the first committed step in the biosynthesis of AMP from IMP. The chain is Adenylosuccinate synthetase from Aquifex aeolicus (strain VF5).